We begin with the raw amino-acid sequence, 176 residues long: Phosphopantetheine adenylyltransferase (176 aa).

Thr-11 lines the substrate pocket. Residues 11-12 (TF) and His-19 each bind ATP. Positions 43, 93, and 107 each coordinate substrate. Residues Glu-117 and 141-147 (LSVVSSS) each bind ATP.

It belongs to the bacterial CoaD family. As to quaternary structure, homohexamer. The cofactor is Mg(2+).

Its subcellular location is the cytoplasm. It carries out the reaction (R)-4'-phosphopantetheine + ATP + H(+) = 3'-dephospho-CoA + diphosphate. The protein operates within cofactor biosynthesis; coenzyme A biosynthesis; CoA from (R)-pantothenate: step 4/5. Its function is as follows. Reversibly transfers an adenylyl group from ATP to 4'-phosphopantetheine, yielding dephospho-CoA (dPCoA) and pyrophosphate. This is Phosphopantetheine adenylyltransferase from Tropheryma whipplei (strain TW08/27) (Whipple's bacillus).